Consider the following 692-residue polypeptide: Proprotein convertase subtilisin/kexin type 9 (692 aa).

The first 30 residues, 1–30 (MGTVSSRRSWWPLPLLLLLLLLLGPAGARA), serve as a signal peptide directing secretion. The propeptide occupies 31–152 (QEDEDGDYEE…IEEDSSVFAQ (122 aa)). Y38 is subject to Sulfotyrosine. S47 carries the post-translational modification Phosphoserine. An Inhibitor I9 domain is found at 77–149 (TYVVVLKEET…VDYIEEDSSV (73 aa)). The region spanning 155–461 (PWNLERITPP…GWQLFCRTVW (307 aa)) is the Peptidase S8 domain. Residues D186 and H226 each act as charge relay system in the active site. Disulfide bonds link C223/C255 and C323/C358. The active-site Charge relay system is S386. Residues 450 to 692 (GAGWQLFCRT…HLAQASQELQ (243 aa)) form a C-terminal domain region. Disulfide bonds link C457–C527, C477–C526, and C486–C509. An N-linked (GlcNAc...) asparagine glycan is attached at N533. 6 cysteine pairs are disulfide-bonded: C534/C601, C552/C600, C562/C588, C608/C679, C626/C678, and C635/C654. S688 is subject to Phosphoserine.

The protein belongs to the peptidase S8 family. In terms of assembly, monomer. Can self-associate to form dimers and higher multimers which may have increased LDLR degrading activity. The precursor protein but not the mature protein may form multimers. Interacts with APOB, VLDLR, LRP8/APOER2 and BACE1. The full-length immature form (pro-PCSK9) interacts with SCNN1A, SCNN1B and SCNN1G. The pro-PCSK9 form (via C-terminal domain) interacts with LDLR. Interacts (via the C-terminal domain) with ANXA2 (via repeat Annexin 1); the interaction inhibits the degradation of LDLR. Ca(2+) is required as a cofactor. In terms of processing, cleavage by furin and PCSK5 generates a truncated inactive protein that is unable to induce LDLR degradation. Undergoes autocatalytic cleavage in the endoplasmic reticulum to release the propeptide from the N-terminus and the cleavage of the propeptide is strictly required for its maturation and activation. The cleaved propeptide however remains associated with the catalytic domain through non-covalent interactions, preventing potential substrates from accessing its active site. As a result, it is secreted from cells as a propeptide-containing, enzymatically inactive protein. Post-translationally, phosphorylation protects the propeptide against proteolysis.

Its subcellular location is the cytoplasm. The protein resides in the secreted. It localises to the endosome. The protein localises to the lysosome. It is found in the cell surface. Its subcellular location is the endoplasmic reticulum. The protein resides in the golgi apparatus. With respect to regulation, its proteolytic activity is autoinhibited by the non-covalent binding of the propeptide to the catalytic domain. Inhibited by EGTA. Its function is as follows. Crucial player in the regulation of plasma cholesterol homeostasis. Binds to low-density lipid receptor family members: low density lipoprotein receptor (LDLR), very low density lipoprotein receptor (VLDLR), apolipoprotein E receptor (LRP1/APOER) and apolipoprotein receptor 2 (LRP8/APOER2), and promotes their degradation in intracellular acidic compartments. Acts via a non-proteolytic mechanism to enhance the degradation of the hepatic LDLR through a clathrin LDLRAP1/ARH-mediated pathway. May prevent the recycling of LDLR from endosomes to the cell surface or direct it to lysosomes for degradation. Can induce ubiquitination of LDLR leading to its subsequent degradation. Inhibits intracellular degradation of APOB via the autophagosome/lysosome pathway in a LDLR-independent manner. Involved in the disposal of non-acetylated intermediates of BACE1 in the early secretory pathway. Inhibits epithelial Na(+) channel (ENaC)-mediated Na(+) absorption by reducing ENaC surface expression primarily by increasing its proteasomal degradation. Regulates neuronal apoptosis via modulation of LRP8/APOER2 levels and related anti-apoptotic signaling pathways. This chain is Proprotein convertase subtilisin/kexin type 9 (PCSK9), found in Pan troglodytes (Chimpanzee).